The primary structure comprises 146 residues: Hemoglobin subunit beta (146 aa).

Position 1 is an N-acetylvaline (Val1). One can recognise a Globin domain in the interval 2-146; that stretch reads HLTDGEKNAL…VANALAHKYH (145 aa). A Phosphoserine modification is found at Ser44. An N6-acetyllysine modification is found at Lys59. His63 lines the heme b pocket. An N6-acetyllysine modification is found at Lys82. Residue His92 coordinates heme b. At Cys93 the chain carries S-nitrosocysteine. Lys144 is subject to N6-acetyllysine.

It belongs to the globin family. As to quaternary structure, heterotetramer of two alpha chains and two beta chains. As to expression, red blood cells.

In terms of biological role, involved in oxygen transport from the lung to the various peripheral tissues. The sequence is that of Hemoglobin subunit beta from Otospermophilus beecheyi (California ground squirrel).